We begin with the raw amino-acid sequence, 285 residues long: Probable nudix hydrolase C6G9.05 (285 aa).

The region spanning 114–254 is the Nudix hydrolase domain; it reads TRFASVLMPL…DLLYVEFNID (141 aa). The Nudix box signature appears at 153-175; sequence GRVEPSDGSHYYAALRETYEEIG. Glu-169 and Glu-173 together coordinate Mg(2+).

This sequence belongs to the Nudix hydrolase family. PCD1 subfamily. The cofactor is Mn(2+). It depends on Mg(2+) as a cofactor.

Probably mediates the hydrolysis of some nucleoside diphosphate derivatives. The polypeptide is Probable nudix hydrolase C6G9.05 (Schizosaccharomyces pombe (strain 972 / ATCC 24843) (Fission yeast)).